A 113-amino-acid chain; its full sequence is UPF0482 protein YnfB (113 aa).

The first 28 residues, 1–28 (MNILSGKLPFLLGAVFAGSVVLATSVQA), serve as a signal peptide directing secretion.

It belongs to the UPF0482 family.

In Escherichia fergusonii (strain ATCC 35469 / DSM 13698 / CCUG 18766 / IAM 14443 / JCM 21226 / LMG 7866 / NBRC 102419 / NCTC 12128 / CDC 0568-73), this protein is UPF0482 protein YnfB.